The chain runs to 25 residues: Tubulin alpha chain (25 aa).

GTP is bound at residue Gln11.

It belongs to the tubulin family. As to quaternary structure, dimer of alpha and beta chains. A typical microtubule is a hollow water-filled tube with an outer diameter of 25 nm and an inner diameter of 15 nM. Alpha-beta heterodimers associate head-to-tail to form protofilaments running lengthwise along the microtubule wall with the beta-tubulin subunit facing the microtubule plus end conferring a structural polarity. Microtubules usually have 13 protofilaments but different protofilament numbers can be found in some organisms and specialized cells. Mg(2+) is required as a cofactor.

It localises to the cytoplasm. It is found in the cytoskeleton. It catalyses the reaction GTP + H2O = GDP + phosphate + H(+). Functionally, tubulin is the major constituent of microtubules, a cylinder consisting of laterally associated linear protofilaments composed of alpha- and beta-tubulin heterodimers. Microtubules grow by the addition of GTP-tubulin dimers to the microtubule end, where a stabilizing cap forms. Below the cap, tubulin dimers are in GDP-bound state, owing to GTPase activity of alpha-tubulin. This Leptomonas seymouri protein is Tubulin alpha chain.